Reading from the N-terminus, the 413-residue chain is Arginine biosynthesis bifunctional protein ArgJ (413 aa).

Substrate-binding residues include T158, K184, T195, E285, N408, and S413. T195 (nucleophile) is an active-site residue.

This sequence belongs to the ArgJ family. In terms of assembly, heterotetramer of two alpha and two beta chains.

It is found in the cytoplasm. It catalyses the reaction N(2)-acetyl-L-ornithine + L-glutamate = N-acetyl-L-glutamate + L-ornithine. The catalysed reaction is L-glutamate + acetyl-CoA = N-acetyl-L-glutamate + CoA + H(+). The protein operates within amino-acid biosynthesis; L-arginine biosynthesis; L-ornithine and N-acetyl-L-glutamate from L-glutamate and N(2)-acetyl-L-ornithine (cyclic): step 1/1. Its pathway is amino-acid biosynthesis; L-arginine biosynthesis; N(2)-acetyl-L-ornithine from L-glutamate: step 1/4. Functionally, catalyzes two activities which are involved in the cyclic version of arginine biosynthesis: the synthesis of N-acetylglutamate from glutamate and acetyl-CoA as the acetyl donor, and of ornithine by transacetylation between N(2)-acetylornithine and glutamate. This is Arginine biosynthesis bifunctional protein ArgJ from Rhizobium meliloti (strain 1021) (Ensifer meliloti).